Consider the following 385-residue polypeptide: Deoxyhypusine synthase (385 aa).

Residues 108–112 (SNLIS), 134–136 (TAG), E140, and D257 each bind NAD(+). 139 to 140 (EE) lines the spermidine pocket. D262 lines the spermidine pocket. G304 lines the NAD(+) pocket. H309 contacts spermidine. 329-330 (TG) is a binding site for NAD(+). Spermidine is bound by residues 335–337 (GSD) and 344–350 (EAVSWGK). The active-site Nucleophile is the K350. 363 to 364 (DV) is an NAD(+) binding site.

It belongs to the deoxyhypusine synthase family. It depends on NAD(+) as a cofactor.

It carries out the reaction [eIF5A protein]-L-lysine + spermidine = [eIF5A protein]-deoxyhypusine + propane-1,3-diamine. It participates in protein modification; eIF5A hypusination. Catalyzes the NAD-dependent oxidative cleavage of spermidine and the subsequent transfer of the butylamine moiety of spermidine to the epsilon-amino group of a specific lysine residue of the eIF-5A precursor protein to form the intermediate deoxyhypusine residue. This chain is Deoxyhypusine synthase (DYS1), found in Candida glabrata (strain ATCC 2001 / BCRC 20586 / JCM 3761 / NBRC 0622 / NRRL Y-65 / CBS 138) (Yeast).